The primary structure comprises 106 residues: UPF0145 protein MA_3383 (106 aa).

Belongs to the UPF0145 family.

The chain is UPF0145 protein MA_3383 from Methanosarcina acetivorans (strain ATCC 35395 / DSM 2834 / JCM 12185 / C2A).